The following is a 459-amino-acid chain: Transcription factor 7-like 2 (459 aa).

Residues 1–11 show a composition bias toward gly residues; it reads MPQLNGGGGDD. The interval 1 to 53 is CTNNB1-binding; sequence MPQLNGGGGDDLGANDELISFKDEGEQEEKNSENSSAERDLADVKSSLVNESE. The segment at 1–96 is disordered; the sequence is MPQLNGGGGD…AKRQDGGLFK (96 aa). A compositionally biased stretch (basic and acidic residues) spans 19–43; the sequence is ISFKDEGEQEEKNSENSSAERDLAD. Lysine 22 is covalently cross-linked (Glycyl lysine isopeptide (Lys-Gly) (interchain with G-Cter in SUMO2)). A compositionally biased stretch (polar residues) spans 47 to 56; the sequence is SLVNESETNQ. The span at 63–91 shows a compositional bias: basic and acidic residues; that stretch reads EAERRPPPRSESFRDKSRESLEEAAKRQD. Threonine 178 and threonine 189 each carry phosphothreonine; by NLK. A mediates interaction with MAD2L2 region spans residues 178–372; the sequence is TPLITYSNEH…RRWHALSREE (195 aa). The span at 295–305 shows a compositional bias: polar residues; the sequence is TVKQESSQSDV. 2 disordered regions span residues 295–327 and 397–418; these read TVKQESSQSDVGSLHSSKHQDSKKEEEKKKPHI and RDNYGKKKKRKRDKQPGETNEH. Lysine 297 is covalently cross-linked (Glycyl lysine isopeptide (Lys-Gly) (interchain with G-Cter in SUMO)). Basic and acidic residues predominate over residues 312–323; it reads KHQDSKKEEEKK. A DNA-binding region (HMG box) is located at residues 327–395; that stretch reads IKKPLNAFML…LHMQLYPGWS (69 aa). The short motif at 402–408 is the Nuclear localization signal element; that stretch reads KKKKRKR.

Belongs to the TCF/LEF family. In terms of assembly, interacts with TGFB1I1. Interacts with SPIN1. Interacts with CTNNB1 (via the armadillo repeat); forms stable transcription complex. Interacts with EP300. Interacts with NLK. Interacts with CCDC85B (probably through the HMG box); prevents interaction with CTNNB1. Interacts with TNIK. Interacts with MAD2L2; prevents TCF7L2/TCF4 binding to promZIPK/DAPK3oters, negatively modulating its transcriptional activity. Interacts with ZIPK/DAPK3. Interacts with XIAP/BIRC4 and TLE3. Interacts with DDIT3/CHOP. The CTNNB1 and TCF7L2/TCF4 complex interacts with PML (isoform PML-4). Identified in a complex with CTNNB1 and FERMT2. Interacts with C11orf84/SPINDOC in a SPIN1-dependent manner. Interacts with DAZAP2; the interaction results in localization of DAZAP2 to the nucleus. Phosphorylated at Thr-178 and/or Thr-189 by NLK. Phosphorylation by NLK at these sites inhibits DNA-binding by TCF7L2/TCF4, thereby preventing transcriptional activation of target genes of the canonical Wnt/beta-catenin signaling pathway. In terms of processing, polysumoylated. Sumoylation is enhanced by PIAS family members and desumoylation is enhanced by SENP2. Sumoylation/desumoylation regulates TCF7L2/TCF4 transcription activity in the Wnt/beta-catenin signaling pathway without altering interaction with CTNNB1 nor binding to DNA. Detected in adult brain and liver, and at lower levels in intestine, with a clear increase from the distal colon to the duodenum. Detected at low levels in heart, lung, kidney, pituitary and testis.

Its subcellular location is the nucleus. It is found in the PML body. Its function is as follows. Participates in the Wnt signaling pathway and modulates MYC expression by binding to its promoter in a sequence-specific manner. Acts as a repressor in the absence of CTNNB1, and as activator in its presence. Activates transcription from promoters with several copies of the Tcf motif CCTTTGATC in the presence of CTNNB1. TLE1, TLE2, TLE3 and TLE4 repress transactivation mediated by TCF7L2/TCF4 and CTNNB1. Expression of dominant-negative mutants results in cell-cycle arrest in G1. Necessary for the maintenance of the epithelial stem-cell compartment of the small intestine. The sequence is that of Transcription factor 7-like 2 (Tcf7l2) from Mus musculus (Mouse).